The sequence spans 347 residues: Aspartate-semialdehyde dehydrogenase (347 aa).

Residues 13-16 (TGAV) and 41-42 (RS) each bind NADP(+). Arginine 101 lines the phosphate pocket. Catalysis depends on cysteine 132, which acts as the Acyl-thioester intermediate. Position 159 (glutamine 159) interacts with substrate. 162–163 (SG) is a binding site for NADP(+). Lysine 216 is a binding site for phosphate. Arginine 238 provides a ligand contact to substrate. Histidine 245 serves as the catalytic Proton acceptor. Residue asparagine 319 coordinates NADP(+).

Belongs to the aspartate-semialdehyde dehydrogenase family. Homodimer.

It carries out the reaction L-aspartate 4-semialdehyde + phosphate + NADP(+) = 4-phospho-L-aspartate + NADPH + H(+). Its pathway is amino-acid biosynthesis; L-lysine biosynthesis via DAP pathway; (S)-tetrahydrodipicolinate from L-aspartate: step 2/4. It functions in the pathway amino-acid biosynthesis; L-methionine biosynthesis via de novo pathway; L-homoserine from L-aspartate: step 2/3. It participates in amino-acid biosynthesis; L-threonine biosynthesis; L-threonine from L-aspartate: step 2/5. Functionally, catalyzes the NADPH-dependent formation of L-aspartate-semialdehyde (L-ASA) by the reductive dephosphorylation of L-aspartyl-4-phosphate. The protein is Aspartate-semialdehyde dehydrogenase of Legionella pneumophila.